The chain runs to 221 residues: GTP-binding nuclear protein Ran-1 (221 aa).

Positions 10–174 (DYPSFKLVIV…LYLARKLAGD (165 aa)) constitute a Small GTPase Ran-type domain. 21–28 (DGGTGKTT) is a binding site for GTP. A switch-I region spans residues 40 to 48 (KKYEPTIGV). GTP is bound by residues Gly71, 125–128 (NKVD), and 153–155 (SAK). Positions 71–87 (GQEKFGGLRDGYYIHGQ) are switch-II.

Belongs to the small GTPase superfamily. Ran family. In terms of assembly, found in a nuclear export complex with RanGTP, exportin and pre-miRNA. Interacts with RANBP1A and RANBP1B. Interacts with TRN1. Interacts with ATX1. Interacts with KPNB1. Binds to XPO1. Interacts with MOS14. Binds to NTF2B.

It is found in the nucleus. GTP-binding protein involved in nucleocytoplasmic transport. Required for the import of protein into the nucleus and also for RNA export. Involved in chromatin condensation and control of cell cycle. The polypeptide is GTP-binding nuclear protein Ran-1 (RAN1) (Arabidopsis thaliana (Mouse-ear cress)).